Consider the following 136-residue polypeptide: Ig heavy chain V region BCL1 (136 aa).

The N-terminal stretch at 1–19 (MGWSCIIFFLVATATGVHS) is a signal peptide. The Ig-like domain maps to 20–135 (QVQLQQSGPE…WGQGTTLTVS (116 aa)).

This chain is Ig heavy chain V region BCL1, found in Mus musculus (Mouse).